The sequence spans 302 residues: G-protein coupled receptor A5 (302 aa).

Residues 1–20 are Extracellular-facing; sequence MADSSNSSLNCTAIHDQTVL. A helical membrane pass occupies residues 21–41; the sequence is ILGQVFNSVWLFISVIFLYIF. The Cytoplasmic segment spans residues 42–50; sequence ACKLCFRPR. A helical membrane pass occupies residues 51–71; it reads IYLWLSFYTLGFMLWVLCKVL. Residues 72 to 81 are Extracellular-facing; the sequence is QEYVTGKFKC. The helical transmembrane segment at 82–102 threads the bilayer; sequence VITNCIGDFCLVFLSCIMLGI. Residues 103 to 122 lie on the Cytoplasmic side of the membrane; it reads MLDRYLKIQGTLRGGMKDIH. The chain crosses the membrane as a helical span at residues 123-143; sequence IGIFVSASCFGSLMIALLDGL. The Extracellular segment spans residues 144 to 173; sequence HMGDSEKLQFNGTESFKCLPATSVSSYKAQ. A helical membrane pass occupies residues 174–194; it reads LMFKSIFCIICIIMCLILTCL. The Cytoplasmic segment spans residues 195 to 208; the sequence is TAKKVLGTRLRKKY. Residues 209–229 traverse the membrane as a helical segment; sequence VIVGNVGLLSFVNILLWVMIA. Over 230-249 the chain is Extracellular; the sequence is CGLLKQALESNLSLCPTKQS. A helical membrane pass occupies residues 250-270; sequence TYIYPYTMPVTVIFVLVIYLF. Topologically, residues 271–302 are cytoplasmic; the sequence is SSTHMKNAMRKSGQIRHSLSSPNQVQSSFRLV.

It belongs to the G-protein coupled receptor 1 family.

The protein resides in the host cell membrane. It is found in the host endoplasmic reticulum membrane. In terms of biological role, acts as a viral G-protein coupled receptor that constitutively activates host alphai-type G-proteins, thereby inhibiting host forskolin-triggered CREB activation. This is G-protein coupled receptor A5 (A5) from Connochaetes taurinus (Blue wildebeest).